The chain runs to 1462 residues: Gag-Pol polyprotein (1462 aa).

Gly2 carries the N-myristoyl glycine; by host lipid modification. The interval 7–31 (VLRGKKADELEKVRLRPNGKKRYRL) is interaction with Gp41. The short motif at 16–22 (LEKVRLR) is the Nuclear export signal element. The Nuclear localization signal signature appears at 26–32 (KKRYRLK). The interaction with human PPIA/CYPA and NUP153 stretch occupies residues 191-228 (NCVGDHQAAMQIIREIINEEAADWDAQHPIPGPLPAGQ). The segment at 279–365 (YNPTNILDVK…GGPSQKARLM (87 aa)) is dimerization/Multimerization of capsid protein p24. 2 CCHC-type zinc fingers span residues 389–406 (IRCWNCGKEGHSAKQCRA) and 410–427 (QGCWKCGKSGHIMANCPE). Positions 433–509 (LDGPTGKAAP…DAPQRGDRGL (77 aa)) are disordered. A compositionally biased stretch (polar residues) spans 448–465 (PSSSGADTNSTPNRSSSG). Composition is skewed to basic and acidic residues over residues 472–482 (AAREKAERAEG) and 497–507 (AGRDAPQRGDR). The interval 512 to 516 (PQFSL) is dimerization of protease. Positions 532–601 (EVLLDTGADD…PINIFGRNIL (70 aa)) constitute a Peptidase A2 domain. The active-site For protease activity; shared with dimeric partner is the Asp536. Dimerization of protease regions lie at residues 560–566 (GIGGFIN) and 599–611 (NILATLGMSLNLP). The region spanning 655–845 (GQLEEAPPTN…PFQWMGYELW (191 aa)) is the Reverse transcriptase domain. Positions 720, 795, and 796 each coordinate Mg(2+). The segment at 837–845 (FQWMGYELW) is RT 'primer grip'. A Tryptophan repeat motif motif is present at residues 1007–1023 (WEQWWDNYWQVTWVPEW). The RNase H type-1 domain maps to 1043–1166 (IPGTETFYTD…VDHLVSQGIR (124 aa)). The Mg(2+) site is built by Asp1052, Glu1087, Asp1107, and Asp1158. An Integrase-type zinc finger spans residues 1172-1213 (EKIEPAQEEHEKYHSNIKELTHKFGIPQLVARQIVNTCAQCQ). 4 residues coordinate Zn(2+): His1181, His1185, Cys1209, and Cys1212. Positions 1223–1374 (VNAEIGVWQM…PAERLINMIT (152 aa)) constitute an Integrase catalytic domain. Mg(2+) is bound by residues Asp1233, Asp1285, and Glu1321. A DNA-binding region (integrase-type) is located at residues 1392-1439 (FQVYYREGRDQLWKGPGELLWKGDGAVIVKVGADIKVVPRRKAKIIRD).

As to quaternary structure, homotrimer; further assembles as hexamers of trimers. Interacts with gp41 (via C-terminus). Interacts with host CALM1; this interaction induces a conformational change in the Matrix protein, triggering exposure of the myristate group. Interacts with host AP3D1; this interaction allows the polyprotein trafficking to multivesicular bodies during virus assembly. Part of the pre-integration complex (PIC) which is composed of viral genome, matrix protein, Vpr and integrase. Homodimer; the homodimer further multimerizes as homohexamers or homopentamers. Interacts with human PPIA/CYPA. Interacts with human NUP153. Interacts with host PDZD8; this interaction stabilizes the capsid. Interacts with monkey TRIM5; this interaction destabilizes the capsid. In terms of assembly, homodimer, whose active site consists of two apposed aspartic acid residues. As to quaternary structure, heterodimer of p66 RT and p51 RT (RT p66/p51). Heterodimerization of RT is essential for DNA polymerase activity. The overall folding of the subdomains is similar in p66 RT and p51 RT but the spatial arrangements of the subdomains are dramatically different. Homotetramer; may further associate as a homohexadecamer. Part of the pre-integration complex (PIC) which is composed of viral genome, matrix protein, Vpr and integrase. Interacts with human SMARCB1/INI1 and human PSIP1/LEDGF isoform 1. Interacts with human KPNA3; this interaction might play a role in nuclear import of the pre-integration complex. Interacts with human NUP153; this interaction might play a role in nuclear import of the pre-integration complex. Mg(2+) is required as a cofactor. In terms of processing, specific enzymatic cleavages by the viral protease yield mature proteins. The protease is released by autocatalytic cleavage. The polyprotein is cleaved during and after budding, this process is termed maturation. Proteolytic cleavage of p66 RT removes the RNase H domain to yield the p51 RT subunit. Nucleocapsid protein p7 might be further cleaved after virus entry.

It is found in the host cell membrane. The protein localises to the host endosome. The protein resides in the host multivesicular body. It localises to the virion membrane. Its subcellular location is the host nucleus. It is found in the host cytoplasm. The protein localises to the virion. The enzyme catalyses Endopeptidase for which the P1 residue is preferably hydrophobic.. The catalysed reaction is Endohydrolysis of RNA in RNA/DNA hybrids. Three different cleavage modes: 1. sequence-specific internal cleavage of RNA. Human immunodeficiency virus type 1 and Moloney murine leukemia virus enzymes prefer to cleave the RNA strand one nucleotide away from the RNA-DNA junction. 2. RNA 5'-end directed cleavage 13-19 nucleotides from the RNA end. 3. DNA 3'-end directed cleavage 15-20 nucleotides away from the primer terminus.. It catalyses the reaction 3'-end directed exonucleolytic cleavage of viral RNA-DNA hybrid.. It carries out the reaction DNA(n) + a 2'-deoxyribonucleoside 5'-triphosphate = DNA(n+1) + diphosphate. Protease: The viral protease is inhibited by many synthetic protease inhibitors (PIs), such as amprenavir, atazanavir, indinavir, loprinavir, nelfinavir, ritonavir and saquinavir. Use of protease inhibitors in tritherapy regimens permit more ambitious therapeutic strategies. Reverse transcriptase/ribonuclease H: RT can be inhibited either by nucleoside RT inhibitors (NRTIs) or by non nucleoside RT inhibitors (NNRTIs). NRTIs act as chain terminators, whereas NNRTIs inhibit DNA polymerization by binding a small hydrophobic pocket near the RT active site and inducing an allosteric change in this region. Classical NRTIs are abacavir, adefovir (PMEA), didanosine (ddI), lamivudine (3TC), stavudine (d4T), tenofovir (PMPA), zalcitabine (ddC), and zidovudine (AZT). Classical NNRTIs are atevirdine (BHAP U-87201E), delavirdine, efavirenz (DMP-266), emivirine (I-EBU), and nevirapine (BI-RG-587). The tritherapies used as a basic effective treatment of AIDS associate two NRTIs and one NNRTI. Its function is as follows. Mediates, with Gag polyprotein, the essential events in virion assembly, including binding the plasma membrane, making the protein-protein interactions necessary to create spherical particles, recruiting the viral Env proteins, and packaging the genomic RNA via direct interactions with the RNA packaging sequence (Psi). Gag-Pol polyprotein may regulate its own translation, by the binding genomic RNA in the 5'-UTR. At low concentration, the polyprotein would promote translation, whereas at high concentration, the polyprotein would encapsidate genomic RNA and then shut off translation. In terms of biological role, targets the polyprotein to the plasma membrane via a multipartite membrane-binding signal, that includes its myristoylated N-terminus. Matrix protein is part of the pre-integration complex. Implicated in the release from host cell mediated by Vpu. Binds to RNA. Functionally, forms the conical core that encapsulates the genomic RNA-nucleocapsid complex in the virion. Most core are conical, with only 7% tubular. The core is constituted by capsid protein hexamer subunits. The core is disassembled soon after virion entry. Host restriction factors such as TRIM5-alpha or TRIMCyp bind retroviral capsids and cause premature capsid disassembly, leading to blocks in reverse transcription. Capsid restriction by TRIM5 is one of the factors which restricts HIV-1 to the human species. Host PIN1 apparently facilitates the virion uncoating. On the other hand, interactions with PDZD8 or CYPA stabilize the capsid. Encapsulates and protects viral dimeric unspliced genomic RNA (gRNA). Binds these RNAs through its zinc fingers. Acts as a nucleic acid chaperone which is involved in rearangement of nucleic acid secondary structure during gRNA retrotranscription. Also facilitates template switch leading to recombination. As part of the polyprotein, participates in gRNA dimerization, packaging, tRNA incorporation and virion assembly. Its function is as follows. Aspartyl protease that mediates proteolytic cleavages of Gag and Gag-Pol polyproteins during or shortly after the release of the virion from the plasma membrane. Cleavages take place as an ordered, step-wise cascade to yield mature proteins. This process is called maturation. Displays maximal activity during the budding process just prior to particle release from the cell. Also cleaves Nef and Vif, probably concomitantly with viral structural proteins on maturation of virus particles. Hydrolyzes host EIF4GI and PABP1 in order to shut off the capped cellular mRNA translation. The resulting inhibition of cellular protein synthesis serves to ensure maximal viral gene expression and to evade host immune response. In terms of biological role, multifunctional enzyme that converts the viral RNA genome into dsDNA in the cytoplasm, shortly after virus entry into the cell. This enzyme displays a DNA polymerase activity that can copy either DNA or RNA templates, and a ribonuclease H (RNase H) activity that cleaves the RNA strand of RNA-DNA heteroduplexes in a partially processive 3' to 5' endonucleasic mode. Conversion of viral genomic RNA into dsDNA requires many steps. A tRNA(3)-Lys binds to the primer-binding site (PBS) situated at the 5'-end of the viral RNA. RT uses the 3' end of the tRNA primer to perform a short round of RNA-dependent minus-strand DNA synthesis. The reading proceeds through the U5 region and ends after the repeated (R) region which is present at both ends of viral RNA. The portion of the RNA-DNA heteroduplex is digested by the RNase H, resulting in a ssDNA product attached to the tRNA primer. This ssDNA/tRNA hybridizes with the identical R region situated at the 3' end of viral RNA. This template exchange, known as minus-strand DNA strong stop transfer, can be either intra- or intermolecular. RT uses the 3' end of this newly synthesized short ssDNA to perform the RNA-dependent minus-strand DNA synthesis of the whole template. RNase H digests the RNA template except for two polypurine tracts (PPTs) situated at the 5'-end and near the center of the genome. It is not clear if both polymerase and RNase H activities are simultaneous. RNase H probably can proceed both in a polymerase-dependent (RNA cut into small fragments by the same RT performing DNA synthesis) and a polymerase-independent mode (cleavage of remaining RNA fragments by free RTs). Secondly, RT performs DNA-directed plus-strand DNA synthesis using the PPTs that have not been removed by RNase H as primers. PPTs and tRNA primers are then removed by RNase H. The 3' and 5' ssDNA PBS regions hybridize to form a circular dsDNA intermediate. Strand displacement synthesis by RT to the PBS and PPT ends produces a blunt ended, linear dsDNA copy of the viral genome that includes long terminal repeats (LTRs) at both ends. Functionally, catalyzes viral DNA integration into the host chromosome, by performing a series of DNA cutting and joining reactions. This enzyme activity takes place after virion entry into a cell and reverse transcription of the RNA genome in dsDNA. The first step in the integration process is 3' processing. This step requires a complex comprising the viral genome, matrix protein, Vpr and integrase. This complex is called the pre-integration complex (PIC). The integrase protein removes 2 nucleotides from each 3' end of the viral DNA, leaving recessed CA OH's at the 3' ends. In the second step, the PIC enters cell nucleus. This process is mediated through integrase and Vpr proteins, and allows the virus to infect a non dividing cell. This ability to enter the nucleus is specific of lentiviruses, other retroviruses cannot and rely on cell division to access cell chromosomes. In the third step, termed strand transfer, the integrase protein joins the previously processed 3' ends to the 5' ends of strands of target cellular DNA at the site of integration. The 5'-ends are produced by integrase-catalyzed staggered cuts, 5 bp apart. A Y-shaped, gapped, recombination intermediate results, with the 5'-ends of the viral DNA strands and the 3' ends of target DNA strands remaining unjoined, flanking a gap of 5 bp. The last step is viral DNA integration into host chromosome. This involves host DNA repair synthesis in which the 5 bp gaps between the unjoined strands are filled in and then ligated. Since this process occurs at both cuts flanking the HIV genome, a 5 bp duplication of host DNA is produced at the ends of HIV-1 integration. Alternatively, Integrase may catalyze the excision of viral DNA just after strand transfer, this is termed disintegration. This chain is Gag-Pol polyprotein (gag-pol), found in Human immunodeficiency virus type 2 subtype A (isolate D194) (HIV-2).